A 739-amino-acid polypeptide reads, in one-letter code: Nucleoprotein (739 aa).

Positions 1 to 25 (MDSRPQKIWMAPSLTESDMDYHKIL) are oligomerization, N-terminal arm. The interval 26–405 (TAGLSVQQGI…TLRKERLAKL (380 aa)) is NP core. Residues 415–647 (PKTSGHYDDD…DSDNTQSEHS (233 aa)) form a disordered region. Composition is skewed to low complexity over residues 449-458 (SQDTTIPDVV) and 504-514 (KGGQQKNSQKG). Positions 562-567 (LTPINE) match the Host PPP2R5C-binding motif motif. The span at 567 to 579 (EEADPLDDADDET) shows a compositional bias: acidic residues. The short motif at 606-611 (PPAPVY) is the VP30-binding motif element. A compositionally biased stretch (basic and acidic residues) spans 611–638 (YRDHSEKKELPQDEQQDQDHTQEARNQD).

The protein belongs to the filoviruses nucleoprotein family. Homooligomer. Homomultimerizes to form the nucleocapsid. Binds to viral genomic RNA. Interacts with VP35 and VP30 to form the nucleocapsid. Interacts with host PPP2R5C; this interaction leads to VP30 dephosphorylation and viral transcription. Interacts with VP24; this interaction facilitates nucleocapsid assembly and genome packaging. Interacts with matrix protein VP40; this interaction allows recruitment of the nucleocapsid into progeny virions. Interacts with host STAU1. Interacts with host NXF1 (via RNA-binding domain); this interaction recruits NXF1 to the inclusion bodies were viral replication takes place, probably to export viral mRNA-NXF1 complexes from these sites. Interacts with host CCDC92; this interaction sequesters NP in the host cytoplasm. Interacts with host TRIM14. Phosphorylated by host. In terms of processing, O-glycosylated by host. Post-translationally, acetylated by host EP300 in vitro.

Its subcellular location is the virion. The protein resides in the host cytoplasm. Functionally, oligomerizes into helical capsid to encapsidate the viral genome, protecting it from nucleases and the cellular innate immune response. VP35 binds to and stabilizes monomeric NP, keeping it soluble. Upon virus replication, NP is recruited to bind cooperatively viral genomic RNA and VP35 is released. The encapsidated genomic RNA is termed the nucleocapsid and serves as template for transcription and replication. The nucleocapsid is helical with a pitch of 10.81 NP per turn and a diameter of about 22nm. Each NP binds to six nucleotides of viral genomic RNA, three being exposed to the solvant and three hidden into the nucleocapsid. Also recruits host PPP2R5C phosphatase to dephosphorylate VP30 and thereby promote viral transcription. Upon virion assembly and budding, NP binds to VP24 and possibly host STAU1. The polypeptide is Nucleoprotein (NP) (Epomops franqueti (Franquet's epauletted fruit bat)).